Here is a 468-residue protein sequence, read N- to C-terminus: uncharacterized protein (468 aa).

One can recognise a TRAM domain in the interval 3-61 (TFANGMTLDVTVDALAPGGKAVCRHEGRVIFVDRGLPGQQLHVRLTTVRKRFAEAECLA). Positions 74, 80, 83, and 162 each coordinate [4Fe-4S] cluster. Gln-288, Tyr-317, Glu-338, and Asp-389 together coordinate S-adenosyl-L-methionine. Cys-416 functions as the Nucleophile in the catalytic mechanism.

This sequence belongs to the class I-like SAM-binding methyltransferase superfamily. RNA M5U methyltransferase family.

This is an uncharacterized protein from Nitratidesulfovibrio vulgaris (strain ATCC 29579 / DSM 644 / CCUG 34227 / NCIMB 8303 / VKM B-1760 / Hildenborough) (Desulfovibrio vulgaris).